A 289-amino-acid polypeptide reads, in one-letter code: MYG1 protein TC_0665 (289 aa).

Belongs to the MYG1 family.

This chain is MYG1 protein TC_0665, found in Chlamydia muridarum (strain MoPn / Nigg).